Consider the following 188-residue polypeptide: Large ribosomal subunit protein uL10 (188 aa).

It belongs to the universal ribosomal protein uL10 family. In terms of assembly, part of the ribosomal stalk of the 50S ribosomal subunit. The N-terminus interacts with L11 and the large rRNA to form the base of the stalk. The C-terminus forms an elongated spine to which L12 dimers bind in a sequential fashion forming a multimeric L10(L12)X complex.

Its function is as follows. Forms part of the ribosomal stalk, playing a central role in the interaction of the ribosome with GTP-bound translation factors. In Crocosphaera subtropica (strain ATCC 51142 / BH68) (Cyanothece sp. (strain ATCC 51142)), this protein is Large ribosomal subunit protein uL10.